Reading from the N-terminus, the 447-residue chain is MDMGNQHPSISRLQEIQREVKAIEPQVVGFSGLSDDKNYKRLERILTKQLFEIDSVDTEGKGDIQQARKRAAQETERLLKELEQNANHPHRIEIQNIFKEAQALVKDKIVPFYSGGNCVTDEFEEGIQDIILRLTHVKTGGKVSLRKARYRTLTKICAVQEVIEDCMKKQPSLPLSEDVHPSVAKINSVMCEVNKARGTLIALLMGVDSSETCRHLSCVLSGLIADLDALDVCGRTEIRNYRREVVEDINKLLKYLDLEEEADSTHAFDLGQNHSIIKIENVLKRMREIKNELLQAQSPPELYLRAKTELQGLIGQLDEVSLEKNPCIREARRRAVIEVQILITYLDLKEALEKRKLFPCEEHPPHKAVWEILGNLSEILGEVLSFGGNRTDKNYIRLEELLTKQLLALDAVDPQGEEKCKAARKQAVKLAQNILSYLDMKSDEWEY.

5 BAG domains span residues 9 to 86 (SISR…EQNA), 95 to 167 (QNIF…EDCM), 182 to 260 (SVAK…DLEE), 275 to 350 (SIIK…DLKE), and 365 to 442 (PHKA…DMKS).

In terms of assembly, binds to the ATPase domain of HSP/HSP70 chaperones. Binds PRKN. Interacts with HSPA8. Interacts with JPH2.

Its function is as follows. Co-chaperone for HSP/HSP70 proteins. It functions as a nucleotide-exchange factor promoting the release of ADP from HSP70, thereby activating HSP70-mediated protein refolding. Has an essential role in maintaining proteostasis at junctional membrane complexes (JMC), where it may function as a scaffold between the HSPA8 chaperone and JMC proteins enabling correct, HSPA8-dependent JMC protein folding. Inhibits both auto-ubiquitination of PRKN and ubiquitination of target proteins by PRKN. This chain is BAG family molecular chaperone regulator 5 (Bag5), found in Mus musculus (Mouse).